The chain runs to 918 residues: Alpha-scruin (918 aa).

Kelch repeat units lie at residues 82 to 133, 134 to 187, 188 to 235, 237 to 289, 291 to 341, and 342 to 390; these read VVLA…YFHR, RVYV…VMDE, RIFV…NNEG, IYVI…TQNK, IWIW…KTGA, and HVFI…AIPA. The tract at residues 398-427 is disordered; sequence EVPTSTPSSKAKPQPGSKPTSVKYKKQPDI. One can recognise an IQ domain in the interval 430-459; that stretch reads RNEAAKKVQRRWRRYIEQKSITKRMQQGDS. 6 Kelch repeats span residues 590-641, 642-695, 696-743, 745-795, 797-849, and 851-898; these read VIIG…YYRS, AIYI…VFND, VLYA…AHGG, IWLL…VCDN, IWLC…ALES, and LYIA…TIPP.

In terms of tissue distribution, sperm.

Its function is as follows. Actin bundling protein found in the acrosomal sperm process. The sequence is that of Alpha-scruin from Limulus polyphemus (Atlantic horseshoe crab).